Reading from the N-terminus, the 74-residue chain is uncharacterized protein (74 aa).

The segment at Cys35–Cys59 adopts a dksA C4-type zinc-finger fold.

This is an uncharacterized protein from Enterobacteriaceae (Bacteriophage P2).